The chain runs to 358 residues: Neuronal-specific septin-3 (358 aa).

Over residues 1 to 10 the composition is skewed to basic and acidic residues; it reads MSKGLPEART. Residues 1-29 are disordered; it reads MSKGLPEARTDTAMSELVPEPRPKPAVPM. Residues 58–331 enclose the Septin-type G domain; the sequence is TGFDFNIMVV…ETYRAKRLND (274 aa). Positions 68 to 75 are G1 motif; that stretch reads GQSGLGKS. GTP is bound at residue 68-75; sequence GQSGLGKS. Phosphoserine is present on S91. T102 contacts GTP. A G3 motif region spans residues 125–128; it reads DTPG. A G4 motif region spans residues 207–210; it reads AKAD. Residues 208 to 216, G265, and R280 each bind GTP; that span reads KADTMTLEE.

It belongs to the TRAFAC class TrmE-Era-EngA-EngB-Septin-like GTPase superfamily. Septin GTPase family. As to quaternary structure, septins polymerize into heterooligomeric protein complexes that form filaments, and can associate with cellular membranes, actin filaments and microtubules. GTPase activity is required for filament formation. Phosphorylated by PKG on serine residues. Phosphorylated by PKG on Ser-91. Brain-specific, with highest expression in the hippocampal CA3 region (at protein level).

The protein resides in the cytoplasm. Its subcellular location is the cytoskeleton. The protein localises to the synapse. Filament-forming cytoskeletal GTPase. May play a role in cytokinesis (Potential). The sequence is that of Neuronal-specific septin-3 from Rattus norvegicus (Rat).